The sequence spans 304 residues: UDP-N-acetylenolpyruvoylglucosamine reductase (304 aa).

In terms of domain architecture, FAD-binding PCMH-type spans 34–198 (IGGKADFLVW…LEVVFALRPG (165 aa)). Residue Arg177 is part of the active site. The active-site Proton donor is Ser227. Residue Glu297 is part of the active site.

It belongs to the MurB family. FAD serves as cofactor.

It is found in the cytoplasm. The enzyme catalyses UDP-N-acetyl-alpha-D-muramate + NADP(+) = UDP-N-acetyl-3-O-(1-carboxyvinyl)-alpha-D-glucosamine + NADPH + H(+). The protein operates within cell wall biogenesis; peptidoglycan biosynthesis. In terms of biological role, cell wall formation. The sequence is that of UDP-N-acetylenolpyruvoylglucosamine reductase from Geobacillus kaustophilus (strain HTA426).